A 143-amino-acid polypeptide reads, in one-letter code: Large-conductance mechanosensitive channel (143 aa).

A run of 2 helical transmembrane segments spans residues 10 to 30 and 89 to 109; these read FAVK…GAFS and GSFI…FLMV.

Belongs to the MscL family. As to quaternary structure, homopentamer.

The protein localises to the cell inner membrane. Its function is as follows. Channel that opens in response to stretch forces in the membrane lipid bilayer. May participate in the regulation of osmotic pressure changes within the cell. The protein is Large-conductance mechanosensitive channel of Burkholderia ambifaria (strain ATCC BAA-244 / DSM 16087 / CCUG 44356 / LMG 19182 / AMMD) (Burkholderia cepacia (strain AMMD)).